The primary structure comprises 86 residues: Small ribosomal subunit protein uS17 (86 aa).

Belongs to the universal ribosomal protein uS17 family. As to quaternary structure, part of the 30S ribosomal subunit.

Its function is as follows. One of the primary rRNA binding proteins, it binds specifically to the 5'-end of 16S ribosomal RNA. This Exiguobacterium sp. (strain ATCC BAA-1283 / AT1b) protein is Small ribosomal subunit protein uS17.